Consider the following 416-residue polypeptide: Ribulose bisphosphate carboxylase large chain (416 aa).

N6,N6,N6-trimethyllysine is present on K5. Substrate contacts are provided by N114 and T164. K166 acts as the Proton acceptor in catalysis. K168 is a substrate binding site. Positions 192, 194, and 195 each coordinate Mg(2+). K192 is subject to N6-carboxylysine. H285 (proton acceptor) is an active-site residue. The substrate site is built by R286, H318, and S370.

It belongs to the RuBisCO large chain family. Type I subfamily. Heterohexadecamer of 8 large chains and 8 small chains; disulfide-linked. The disulfide link is formed within the large subunit homodimers. Mg(2+) is required as a cofactor. Post-translationally, the disulfide bond which can form in the large chain dimeric partners within the hexadecamer appears to be associated with oxidative stress and protein turnover.

The protein localises to the plastid. It localises to the chloroplast. The catalysed reaction is 2 (2R)-3-phosphoglycerate + 2 H(+) = D-ribulose 1,5-bisphosphate + CO2 + H2O. It catalyses the reaction D-ribulose 1,5-bisphosphate + O2 = 2-phosphoglycolate + (2R)-3-phosphoglycerate + 2 H(+). Functionally, ruBisCO catalyzes two reactions: the carboxylation of D-ribulose 1,5-bisphosphate, the primary event in carbon dioxide fixation, as well as the oxidative fragmentation of the pentose substrate in the photorespiration process. Both reactions occur simultaneously and in competition at the same active site. The sequence is that of Ribulose bisphosphate carboxylase large chain (rbcL) from Spigelia marilandica (Woodland pinkroot).